A 777-amino-acid polypeptide reads, in one-letter code: Endonuclease MutS2 (777 aa).

328–335 (GPNTGGKT) contacts ATP. A Smr domain is found at 702-777 (LDIRGMNTLE…GDGATEVYLK (76 aa)).

This sequence belongs to the DNA mismatch repair MutS family. MutS2 subfamily. Homodimer. Binds to stalled ribosomes, contacting rRNA.

Functionally, endonuclease that is involved in the suppression of homologous recombination and thus may have a key role in the control of bacterial genetic diversity. Acts as a ribosome collision sensor, splitting the ribosome into its 2 subunits. Detects stalled/collided 70S ribosomes which it binds and splits by an ATP-hydrolysis driven conformational change. Acts upstream of the ribosome quality control system (RQC), a ribosome-associated complex that mediates the extraction of incompletely synthesized nascent chains from stalled ribosomes and their subsequent degradation. Probably generates substrates for RQC. The sequence is that of Endonuclease MutS2 from Carboxydothermus hydrogenoformans (strain ATCC BAA-161 / DSM 6008 / Z-2901).